The sequence spans 110 residues: Ribonuclease P protein component 4 (110 aa).

Residues cysteine 65, cysteine 68, cysteine 94, and cysteine 97 each contribute to the Zn(2+) site.

Belongs to the eukaryotic/archaeal RNase P protein component 4 family. Consists of a catalytic RNA component and at least 4-5 protein subunits. Zn(2+) is required as a cofactor.

It is found in the cytoplasm. It carries out the reaction Endonucleolytic cleavage of RNA, removing 5'-extranucleotides from tRNA precursor.. Its function is as follows. Part of ribonuclease P, a protein complex that generates mature tRNA molecules by cleaving their 5'-ends. The polypeptide is Ribonuclease P protein component 4 (Methanococcus maripaludis (strain C6 / ATCC BAA-1332)).